Reading from the N-terminus, the 223-residue chain is Deoxyribose-phosphate aldolase 2 (223 aa).

The Proton donor/acceptor role is filled by Asp89. The active-site Schiff-base intermediate with acetaldehyde is the Lys152. Lys181 functions as the Proton donor/acceptor in the catalytic mechanism.

The protein belongs to the DeoC/FbaB aldolase family. DeoC type 1 subfamily.

It localises to the cytoplasm. It catalyses the reaction 2-deoxy-D-ribose 5-phosphate = D-glyceraldehyde 3-phosphate + acetaldehyde. It participates in carbohydrate degradation; 2-deoxy-D-ribose 1-phosphate degradation; D-glyceraldehyde 3-phosphate and acetaldehyde from 2-deoxy-alpha-D-ribose 1-phosphate: step 2/2. Its function is as follows. Catalyzes a reversible aldol reaction between acetaldehyde and D-glyceraldehyde 3-phosphate to generate 2-deoxy-D-ribose 5-phosphate. This is Deoxyribose-phosphate aldolase 2 from Bacillus licheniformis (strain ATCC 14580 / DSM 13 / JCM 2505 / CCUG 7422 / NBRC 12200 / NCIMB 9375 / NCTC 10341 / NRRL NRS-1264 / Gibson 46).